The primary structure comprises 235 residues: MSNVQRKRIDIRRPTLAELSSIRSIAMNALNGQSRNLSQKIFWHPLYLAVFGLVFMGIYRLTNMVEGNTKLRTFVLLILVSAVFLTLIEFPCRNVYAKISTEDNQPDGCLAEENLKHFYMARIDKERVIGIIGILPANAPGAYQNTPTIVHWTVIPKFYQYAFDLLDSALREAKEMGADVVSARVYSTDPMLKAFERKDFTPVVDEAFDYLSFFGLRRLVLQKNLSEQPGFENRR.

3 helical membrane-spanning segments follow: residues 41 to 61, 71 to 91, and 129 to 149; these read IFWHPLYLAVFGLVFMGIYRL, LRTFVLLILVSAVFLTLIEFP, and IGIIGILPANAPGAYQNTPTI.

It localises to the membrane. This is an uncharacterized protein from Schizosaccharomyces pombe (strain 972 / ATCC 24843) (Fission yeast).